Here is a 162-residue protein sequence, read N- to C-terminus: Large ribosomal subunit protein uL15 (162 aa).

Over residues 1 to 13 (MNLNELRDNEGSR) the composition is skewed to basic and acidic residues. Residues 1–39 (MNLNELRDNEGSRYRKKRLGRGIGSGKGKTSGRGVKGQK) are disordered. The span at 21–35 (RGIGSGKGKTSGRGV) shows a compositional bias: gly residues.

It belongs to the universal ribosomal protein uL15 family. As to quaternary structure, part of the 50S ribosomal subunit.

Functionally, binds to the 23S rRNA. The polypeptide is Large ribosomal subunit protein uL15 (Gluconobacter oxydans (strain 621H) (Gluconobacter suboxydans)).